Consider the following 75-residue polypeptide: Cytochrome c oxidase subunit 6C (75 aa).

Over 1–13 (MASEVLVKPQMRG) the chain is Mitochondrial matrix. Residues 14–54 (LLARRLRIHMVGAFLVSLGVAALYKFGVAEPRKKAYADFYK) traverse the membrane as a helical segment. Residues 55-75 (NYSAEKDFEEMKKAGLFRSIK) lie on the Mitochondrial intermembrane side of the membrane.

This sequence belongs to the cytochrome c oxidase subunit 6c family. Component of the cytochrome c oxidase (complex IV, CIV), a multisubunit enzyme composed of 14 subunits. The complex is composed of a catalytic core of 3 subunits MT-CO1, MT-CO2 and MT-CO3, encoded in the mitochondrial DNA, and 11 supernumerary subunits COX4I, COX5A, COX5B, COX6A, COX6B, COX6C, COX7A, COX7B, COX7C, COX8 and NDUFA4, which are encoded in the nuclear genome. The complex exists as a monomer or a dimer and forms supercomplexes (SCs) in the inner mitochondrial membrane with NADH-ubiquinone oxidoreductase (complex I, CI) and ubiquinol-cytochrome c oxidoreductase (cytochrome b-c1 complex, complex III, CIII), resulting in different assemblies (supercomplex SCI(1)III(2)IV(1) and megacomplex MCI(2)III(2)IV(2)).

The protein resides in the mitochondrion inner membrane. It functions in the pathway energy metabolism; oxidative phosphorylation. Functionally, component of the cytochrome c oxidase, the last enzyme in the mitochondrial electron transport chain which drives oxidative phosphorylation. The respiratory chain contains 3 multisubunit complexes succinate dehydrogenase (complex II, CII), ubiquinol-cytochrome c oxidoreductase (cytochrome b-c1 complex, complex III, CIII) and cytochrome c oxidase (complex IV, CIV), that cooperate to transfer electrons derived from NADH and succinate to molecular oxygen, creating an electrochemical gradient over the inner membrane that drives transmembrane transport and the ATP synthase. Cytochrome c oxidase is the component of the respiratory chain that catalyzes the reduction of oxygen to water. Electrons originating from reduced cytochrome c in the intermembrane space (IMS) are transferred via the dinuclear copper A center (CU(A)) of subunit 2 and heme A of subunit 1 to the active site in subunit 1, a binuclear center (BNC) formed by heme A3 and copper B (CU(B)). The BNC reduces molecular oxygen to 2 water molecules using 4 electrons from cytochrome c in the IMS and 4 protons from the mitochondrial matrix. This chain is Cytochrome c oxidase subunit 6C (COX6C), found in Plecturocebus donacophilus (Bolivian gray titi monkey).